We begin with the raw amino-acid sequence, 365 residues long: Cytoplasmic tRNA 2-thiolation protein 1 (365 aa).

This sequence belongs to the TtcA family. CTU1/NCS6/ATPBD3 subfamily.

It is found in the cytoplasm. The protein operates within tRNA modification; 5-methoxycarbonylmethyl-2-thiouridine-tRNA biosynthesis. Functionally, plays a central role in 2-thiolation of mcm(5)S(2)U at tRNA wobble positions of tRNA(Lys), tRNA(Glu) and tRNA(Gln). Directly binds tRNAs and probably acts by catalyzing adenylation of tRNAs, an intermediate required for 2-thiolation. It is unclear whether it acts as a sulfurtransferase that transfers sulfur from thiocarboxylated URM1 onto the uridine of tRNAs at wobble position. Prior mcm(5) tRNA modification by the elongator complex is required for 2-thiolation. May also be involved in protein urmylation. The sequence is that of Cytoplasmic tRNA 2-thiolation protein 1 from Yarrowia lipolytica (strain CLIB 122 / E 150) (Yeast).